A 184-amino-acid chain; its full sequence is Ribosome-recycling factor (184 aa).

This sequence belongs to the RRF family.

The protein localises to the cytoplasm. Its function is as follows. Responsible for the release of ribosomes from messenger RNA at the termination of protein biosynthesis. May increase the efficiency of translation by recycling ribosomes from one round of translation to another. The polypeptide is Ribosome-recycling factor (Psychrobacter sp. (strain PRwf-1)).